The primary structure comprises 2290 residues: Protein Ycf2 (2290 aa).

Residue 1638–1645 (GSIGTGRS) participates in ATP binding.

Belongs to the Ycf2 family.

The protein resides in the plastid. It localises to the chloroplast stroma. Its function is as follows. Probable ATPase of unknown function. Its presence in a non-photosynthetic plant (Epifagus virginiana) and experiments in tobacco indicate that it has an essential function which is probably not related to photosynthesis. The protein is Protein Ycf2 of Phalaenopsis aphrodite subsp. formosana (Moth orchid).